We begin with the raw amino-acid sequence, 391 residues long: Acridone synthase 2 (391 aa).

Residue Cys-164 is part of the active site.

This sequence belongs to the thiolase-like superfamily. Chalcone/stilbene synthases family. In terms of assembly, homodimer.

It catalyses the reaction N-methylanthraniloyl-CoA + 3 malonyl-CoA + 3 H(+) = 1,3-dihydroxy-N-methylacridone + 3 CO2 + 4 CoA + H2O. In Ruta graveolens (Common rue), this protein is Acridone synthase 2 (ACS2).